A 505-amino-acid polypeptide reads, in one-letter code: Phase 1 flagellin (505 aa).

Belongs to the bacterial flagellin family.

It localises to the secreted. The protein resides in the bacterial flagellum. In terms of biological role, flagellin is the subunit protein which polymerizes to form the filaments of bacterial flagella. This is Phase 1 flagellin (fliC) from Salmonella naestved.